A 607-amino-acid polypeptide reads, in one-letter code: Rap1 GTPase-GDP dissociation stimulator 1-A (607 aa).

ARM repeat units lie at residues 79 to 118, 170 to 211, 347 to 390, 391 to 431, and 479 to 519; these read ELMRIPCVEAGLIPPLVQLLHSKDQEVLLQTGRALGNICY, DSLQ…NLAE, DGNC…NLAI, PVVN…MLID, and SKDV…LIAA.

As to quaternary structure, interacts with ralB. Probably interacts with the post-translationally isoprenylated (geranyl-geranylation) forms of ral proteins. Interacts with both GDP-bound and GTP-bound forms of ralA, but interaction is much stronger with ralA-GDP. Weakly expressed in adult tissues with highest levels found in spleen, kidney, skin and A6 cells.

The protein localises to the cytoplasm. Its subcellular location is the cytosol. The protein resides in the endoplasmic reticulum. It localises to the mitochondrion. Its function is as follows. Stimulates GDP/GTP exchange reaction of a group of small GTP-binding proteins (G proteins) including Rap1a/Rap1b, RhoA, RhoB and KRas, by stimulating the dissociation of GDP from and the subsequent binding of GTP to each small G protein. The polypeptide is Rap1 GTPase-GDP dissociation stimulator 1-A (rap1gds1-a) (Xenopus laevis (African clawed frog)).